The chain runs to 245 residues: MSRVATSDPSVTARTVAVHAPNGGEGGSVELPGGVFDVPLNIPLIHQVVVAQLAAARQGTHDTKTRGEVRGGGRKPYRQKGTGRARQGSLRAPQFTGGGTVHGPTPRRYDQRTPKKMKAAALRGALSDRARNNRVHVVSSLVSGETPSTKSAVTALRTIADTRRVLVVASRSDELTWKSLRNVAAVHLLDPGQLNTYDVLVSDDVVFIEDALAAFLARDTRPATSTAGTEAAAGTEGVAGAEENK.

The segment covering 1–13 (MSRVATSDPSVTA) has biased composition (polar residues). Disordered stretches follow at residues 1 to 28 (MSRV…EGGS), 56 to 114 (ARQG…QRTP), and 224 to 245 (TSTA…EENK). Basic and acidic residues predominate over residues 59 to 71 (GTHDTKTRGEVRG). Over residues 72-83 (GGRKPYRQKGTG) the composition is skewed to basic residues.

Belongs to the universal ribosomal protein uL4 family. As to quaternary structure, part of the 50S ribosomal subunit.

Functionally, one of the primary rRNA binding proteins, this protein initially binds near the 5'-end of the 23S rRNA. It is important during the early stages of 50S assembly. It makes multiple contacts with different domains of the 23S rRNA in the assembled 50S subunit and ribosome. Its function is as follows. Forms part of the polypeptide exit tunnel. The sequence is that of Large ribosomal subunit protein uL4 from Frankia casuarinae (strain DSM 45818 / CECT 9043 / HFP020203 / CcI3).